Here is a 160-residue protein sequence, read N- to C-terminus: Major pollen allergen Bet v 1-A (160 aa).

Residues lysine 55, tyrosine 82, tyrosine 84, and asparagine 101 each coordinate brassinolide.

This sequence belongs to the BetVI family.

The protein localises to the cytoplasm. Its function is as follows. May be a general steroid carrier protein. This Betula pendula (European white birch) protein is Major pollen allergen Bet v 1-A (BETVIA).